Reading from the N-terminus, the 241-residue chain is Tumor necrosis factor ligand superfamily member 13 (241 aa).

The propeptide occupies 1 to 95 (MPASSPGHMG…KDGAKSRRRR (95 aa)). Positions 107–241 (SVLHLVPVNI…HGTFLGFVKL (135 aa)) constitute a THD domain. N-linked (GlcNAc...) asparagine glycosylation is present at asparagine 115. A disulfide bridge connects residues cysteine 187 and cysteine 202.

Belongs to the tumor necrosis factor family. In terms of assembly, homotrimer. In terms of processing, the soluble form derives from the membrane form by proteolytic processing.

It is found in the secreted. Cytokine that binds to TNFRSF13B/TACI and to TNFRSF17/BCMA. Plays a role in the regulation of tumor cell growth. May be involved in monocyte/macrophage-mediated immunological processes. In Mus musculus (Mouse), this protein is Tumor necrosis factor ligand superfamily member 13 (Tnfsf13).